A 498-amino-acid polypeptide reads, in one-letter code: Beta-amylase 5 (498 aa).

Substrate-binding residues include Asp-56, His-96, and Asp-104. Residue Glu-189 is the Proton donor of the active site. 3 residues coordinate substrate: Lys-298, His-303, and Thr-345. Residue Glu-383 is the Proton acceptor of the active site. Residues 384–385 (NA) and Arg-423 contribute to the substrate site.

The protein belongs to the glycosyl hydrolase 14 family. Detected in phloem sieve elements.

The protein localises to the cytoplasm. It catalyses the reaction Hydrolysis of (1-&gt;4)-alpha-D-glucosidic linkages in polysaccharides so as to remove successive maltose units from the non-reducing ends of the chains.. Its function is as follows. Beta-amylase activity. Major cytosolic beta-amylase isoform in rosette leaves and inflorescences stems. The polypeptide is Beta-amylase 5 (BAM5) (Arabidopsis thaliana (Mouse-ear cress)).